Here is a 650-residue protein sequence, read N- to C-terminus: Vitrin (650 aa).

The N-terminal stretch at methionine 1–serine 26 is a signal peptide. An LCCL domain is found at threonine 40–phenylalanine 133. 2 cysteine pairs are disulfide-bonded: cysteine 46/cysteine 62 and cysteine 66/cysteine 86. Positions arginine 198 to glutamate 226 are disordered. VWFA domains follow at residues aspartate 265–valine 450 and aspartate 467–isoleucine 640. A glycan (N-linked (GlcNAc...) asparagine) is linked at asparagine 492.

As to quaternary structure, binds dermatan sulfate and chondroitin sulfate.

It localises to the secreted. The protein resides in the extracellular space. It is found in the extracellular matrix. Its function is as follows. Promotes matrix assembly and cell adhesiveness. Plays a role in spinal cord formation by regulating the proliferation and differentiation of neural stem cells. The protein is Vitrin (Vit) of Mus musculus (Mouse).